A 213-amino-acid chain; its full sequence is Kynurenine formamidase (213 aa).

Trp-18 contributes to the substrate binding site. Residues His-48, His-52, and Asp-54 each coordinate Zn(2+). Residue His-58 is the Proton donor/acceptor of the active site. The Zn(2+) site is built by His-160 and Glu-172.

The protein belongs to the Cyclase 1 superfamily. KynB family. In terms of assembly, homodimer. The cofactor is Zn(2+).

It carries out the reaction N-formyl-L-kynurenine + H2O = L-kynurenine + formate + H(+). It functions in the pathway amino-acid degradation; L-tryptophan degradation via kynurenine pathway; L-kynurenine from L-tryptophan: step 2/2. In terms of biological role, catalyzes the hydrolysis of N-formyl-L-kynurenine to L-kynurenine, the second step in the kynurenine pathway of tryptophan degradation. This chain is Kynurenine formamidase, found in Burkholderia mallei (strain NCTC 10247).